The primary structure comprises 279 residues: Tryptophan 2,3-dioxygenase (279 aa).

Residues 48 to 52 (FIVIH), Y110, and R114 each bind substrate. Position 237 (H237) interacts with heme. Residue T251 participates in substrate binding.

The protein belongs to the tryptophan 2,3-dioxygenase family. As to quaternary structure, homotetramer. Heme serves as cofactor.

It carries out the reaction L-tryptophan + O2 = N-formyl-L-kynurenine. Its pathway is amino-acid degradation; L-tryptophan degradation via kynurenine pathway; L-kynurenine from L-tryptophan: step 1/2. In terms of biological role, heme-dependent dioxygenase that catalyzes the oxidative cleavage of the L-tryptophan (L-Trp) pyrrole ring and converts L-tryptophan to N-formyl-L-kynurenine. Catalyzes the oxidative cleavage of the indole moiety. The protein is Tryptophan 2,3-dioxygenase of Bacillus cereus (strain ATCC 10987 / NRS 248).